The primary structure comprises 618 residues: uncharacterized protein (618 aa).

The N-terminal stretch at 1–29 is a signal peptide; sequence MSFLVLPPEVNSALMFAGAGSGPTLAAAA. Residues 598–618 are disordered; it reads SGDNSSGGFNAGNDQSGFFDG.

The protein belongs to the mycobacterial PPE family.

This is an uncharacterized protein from Mycobacterium tuberculosis (strain ATCC 25618 / H37Rv).